A 418-amino-acid polypeptide reads, in one-letter code: tRNA wybutosine-synthesizing protein 2 (418 aa).

S-adenosyl-L-methionine contacts are provided by residues serine 228, lysine 235, 275-276 (EI), and 302-303 (EN).

Belongs to the class I-like SAM-binding methyltransferase superfamily. TRM5/TYW2 family.

Its subcellular location is the cytoplasm. It localises to the nucleus. The catalysed reaction is 4-demethylwyosine(37) in tRNA(Phe) + S-adenosyl-L-methionine = 4-demethyl-7-[(3S)-3-amino-3-carboxypropyl]wyosine(37) in tRNA(Phe) + S-methyl-5'-thioadenosine + H(+). It functions in the pathway tRNA modification; wybutosine-tRNA(Phe) biosynthesis. S-adenosyl-L-methionine-dependent transferase that acts as a component of the wybutosine biosynthesis pathway. Wybutosine is a hyper modified guanosine with a tricyclic base found at the 3'-position adjacent to the anticodon of eukaryotic phenylalanine tRNA. Catalyzes the transfer of the alpha-amino-alpha-carboxypropyl (acp) group from S-adenosyl-L-methionine to the C-7 position of 4-demethylwyosine (imG-14) to produce wybutosine-86. The polypeptide is tRNA wybutosine-synthesizing protein 2 (trm12) (Schizosaccharomyces pombe (strain 972 / ATCC 24843) (Fission yeast)).